The primary structure comprises 107 residues: MPPKQQLSKAAKAAAAMAGGKKSKKKWSKKSHKDKAQHAVILDQEKFDRILKEVPTYRYVSVSVLVDRLKIGGSMARVALRHLEREGIIKPISKHSKQAIYTRASAE.

The segment at 1 to 35 (MPPKQQLSKAAKAAAAMAGGKKSKKKWSKKSHKDK) is disordered. Residues 8–20 (SKAAKAAAAMAGG) are compositionally biased toward low complexity. Positions 21–35 (KKSKKKWSKKSHKDK) are enriched in basic residues.

The protein belongs to the eukaryotic ribosomal protein eS25 family.

In Candida glabrata (strain ATCC 2001 / BCRC 20586 / JCM 3761 / NBRC 0622 / NRRL Y-65 / CBS 138) (Yeast), this protein is Small ribosomal subunit protein eS25 (RPS25).